Consider the following 98-residue polypeptide: Small ribosomal subunit protein eS24 (98 aa).

Belongs to the eukaryotic ribosomal protein eS24 family.

In Thermococcus onnurineus (strain NA1), this protein is Small ribosomal subunit protein eS24.